The primary structure comprises 272 residues: Imidazole glycerol phosphate synthase subunit HisF (272 aa).

Active-site residues include Asp11 and Asp130.

The protein belongs to the HisA/HisF family. Heterodimer of HisH and HisF.

It localises to the cytoplasm. The enzyme catalyses 5-[(5-phospho-1-deoxy-D-ribulos-1-ylimino)methylamino]-1-(5-phospho-beta-D-ribosyl)imidazole-4-carboxamide + L-glutamine = D-erythro-1-(imidazol-4-yl)glycerol 3-phosphate + 5-amino-1-(5-phospho-beta-D-ribosyl)imidazole-4-carboxamide + L-glutamate + H(+). It participates in amino-acid biosynthesis; L-histidine biosynthesis; L-histidine from 5-phospho-alpha-D-ribose 1-diphosphate: step 5/9. In terms of biological role, IGPS catalyzes the conversion of PRFAR and glutamine to IGP, AICAR and glutamate. The HisF subunit catalyzes the cyclization activity that produces IGP and AICAR from PRFAR using the ammonia provided by the HisH subunit. This chain is Imidazole glycerol phosphate synthase subunit HisF, found in Methanococcus maripaludis (strain DSM 14266 / JCM 13030 / NBRC 101832 / S2 / LL).